Here is a 179-residue protein sequence, read N- to C-terminus: Cell division protein SepF (179 aa).

The segment at 18–55 is disordered; the sequence is EDSSLPYEKRDEPVFTPVNSSQEPALPMNQPSQSAGTK. Residues 34 to 55 show a composition bias toward polar residues; that stretch reads PVNSSQEPALPMNQPSQSAGTK.

Belongs to the SepF family. Homodimer. Interacts with FtsZ.

The protein localises to the cytoplasm. In terms of biological role, cell division protein that is part of the divisome complex and is recruited early to the Z-ring. Probably stimulates Z-ring formation, perhaps through the cross-linking of FtsZ protofilaments. Its function overlaps with FtsA. This chain is Cell division protein SepF, found in Streptococcus pneumoniae (strain ATCC 700669 / Spain 23F-1).